The chain runs to 436 residues: UPF0597 protein YhaM (436 aa).

This sequence belongs to the UPF0597 family.

This is UPF0597 protein YhaM from Escherichia coli O139:H28 (strain E24377A / ETEC).